Consider the following 413-residue polypeptide: Dolichyl-diphosphooligosaccharide--protein glycosyltransferase 48 kDa subunit (413 aa).

Residues 1-383 lie on the Lumenal side of the membrane; it reads GPRSLVLLEN…QYERFIPSAY (383 aa). A helical membrane pass occupies residues 384–404; it reads PYYAGAFSMMVGLFMFSIVFL. At 405 to 413 the chain is on the cytoplasmic side; sequence HMKEKEKSD.

It belongs to the DDOST 48 kDa subunit family. As to quaternary structure, component of the oligosaccharyltransferase (OST) complex.

It is found in the endoplasmic reticulum. The protein localises to the endoplasmic reticulum membrane. The protein operates within protein modification; protein glycosylation. Subunit of the oligosaccharyl transferase (OST) complex that catalyzes the initial transfer of a defined glycan (Glc(3)Man(9)GlcNAc(2) in eukaryotes) from the lipid carrier dolichol-pyrophosphate to an asparagine residue within an Asn-X-Ser/Thr consensus motif in nascent polypeptide chains, the first step in protein N-glycosylation. N-glycosylation occurs cotranslationally and the complex associates with the Sec61 complex at the channel-forming translocon complex that mediates protein translocation across the endoplasmic reticulum (ER). All subunits are required for a maximal enzyme activity. Required for the assembly of both SST3A- and SS3B-containing OST complexes. The sequence is that of Dolichyl-diphosphooligosaccharide--protein glycosyltransferase 48 kDa subunit from Gallus gallus (Chicken).